An 88-amino-acid polypeptide reads, in one-letter code: Exodeoxyribonuclease 7 small subunit (88 aa).

Positions 69-88 (DPMRPDDGEPFDPSIVSTSQ) are disordered.

This sequence belongs to the XseB family. Heterooligomer composed of large and small subunits.

It localises to the cytoplasm. The enzyme catalyses Exonucleolytic cleavage in either 5'- to 3'- or 3'- to 5'-direction to yield nucleoside 5'-phosphates.. Bidirectionally degrades single-stranded DNA into large acid-insoluble oligonucleotides, which are then degraded further into small acid-soluble oligonucleotides. The sequence is that of Exodeoxyribonuclease 7 small subunit from Xylella fastidiosa (strain M12).